Consider the following 1008-residue polypeptide: Probable transport protein MmpL10 (1008 aa).

12 helical membrane-spanning segments follow: residues tryptophan 23 to proline 43, isoleucine 202 to isoleucine 222, leucine 225 to valine 245, methionine 257 to isoleucine 277, alanine 301 to leucine 321, isoleucine 340 to alanine 360, valine 389 to valine 409, aspartate 835 to leucine 855, isoleucine 862 to valine 882, valine 895 to alanine 915, valine 940 to isoleucine 960, and alanine 961 to valine 981.

This sequence belongs to the resistance-nodulation-cell division (RND) (TC 2.A.6) family. MmpL subfamily.

The protein resides in the cell membrane. The chain is Probable transport protein MmpL10 (mmpL10) from Mycobacterium leprae (strain TN).